We begin with the raw amino-acid sequence, 361 residues long: tRNA/tmRNA (uracil-C(5))-methyltransferase (361 aa).

S-adenosyl-L-methionine contacts are provided by glutamine 185, tyrosine 213, asparagine 218, glutamate 234, and aspartate 294. The active-site Nucleophile is cysteine 319. Glutamate 353 functions as the Proton acceptor in the catalytic mechanism.

This sequence belongs to the class I-like SAM-binding methyltransferase superfamily. RNA M5U methyltransferase family. TrmA subfamily.

It carries out the reaction uridine(54) in tRNA + S-adenosyl-L-methionine = 5-methyluridine(54) in tRNA + S-adenosyl-L-homocysteine + H(+). The catalysed reaction is uridine(341) in tmRNA + S-adenosyl-L-methionine = 5-methyluridine(341) in tmRNA + S-adenosyl-L-homocysteine + H(+). In terms of biological role, dual-specificity methyltransferase that catalyzes the formation of 5-methyluridine at position 54 (m5U54) in all tRNAs, and that of position 341 (m5U341) in tmRNA (transfer-mRNA). The protein is tRNA/tmRNA (uracil-C(5))-methyltransferase of Pseudomonas putida (strain ATCC 47054 / DSM 6125 / CFBP 8728 / NCIMB 11950 / KT2440).